We begin with the raw amino-acid sequence, 241 residues long: Folate receptor alpha (241 aa).

The first 19 residues, 1–19, serve as a signal peptide directing secretion; it reads MAWQMTQLLLLALVAAAWG. Disulfide bonds link Cys-36–Cys-64, Cys-56–Cys-104, Cys-65–Cys-108, Cys-88–Cys-174, Cys-95–Cys-145, Cys-134–Cys-208, Cys-138–Cys-188, and Cys-151–Cys-168. N-linked (GlcNAc...) asparagine glycosylation is present at Asn-68. Residues Asp-102, Tyr-106, 123 to 127, 156 to 161, and Ser-195 each bind folate; these read WRKER and HKGWNW. A glycan (N-linked (GlcNAc...) asparagine) is linked at Asn-160. The GPI-anchor amidated serine moiety is linked to residue Ser-234. Positions 235–241 are cleaved as a propeptide — removed in mature form; the sequence is GSTPQGI.

It belongs to the folate receptor family. The secreted form is derived from the membrane-bound form either by cleavage of the GPI anchor, or/and by proteolysis catalyzed by a metalloprotease. As to expression, detected in milk (at protein level).

The protein localises to the cell membrane. Its subcellular location is the apical cell membrane. The protein resides in the basolateral cell membrane. It localises to the secreted. It is found in the cytoplasmic vesicle. The protein localises to the clathrin-coated vesicle. Its subcellular location is the endosome. Binds to folate and reduced folic acid derivatives and mediates delivery of 5-methyltetrahydrofolate and folate analogs into the interior of cells. Has high affinity for folate and folic acid analogs at neutral pH. Exposure to slightly acidic pH after receptor endocytosis triggers a conformation change that strongly reduces its affinity for folates and mediates their release. Required for normal embryonic development and normal cell proliferation. The sequence is that of Folate receptor alpha (FOLR1) from Bos taurus (Bovine).